The chain runs to 525 residues: GMP synthase [glutamine-hydrolyzing] (525 aa).

Residues 9–207 enclose the Glutamine amidotransferase type-1 domain; sequence RILILDFGSQ…ILDICGCEAL (199 aa). Cys-86 functions as the Nucleophile in the catalytic mechanism. Catalysis depends on residues His-181 and Glu-183. Positions 208–400 constitute a GMPS ATP-PPase domain; sequence WTPSKIAEDA…LGLPYDMVYR (193 aa). Position 235 to 241 (235 to 241) interacts with ATP; the sequence is SGGVDSS.

Homodimer.

It carries out the reaction XMP + L-glutamine + ATP + H2O = GMP + L-glutamate + AMP + diphosphate + 2 H(+). The protein operates within purine metabolism; GMP biosynthesis; GMP from XMP (L-Gln route): step 1/1. Catalyzes the synthesis of GMP from XMP. The chain is GMP synthase [glutamine-hydrolyzing] from Pseudomonas fluorescens (strain ATCC BAA-477 / NRRL B-23932 / Pf-5).